The sequence spans 289 residues: Ribosomal RNA small subunit methyltransferase A (289 aa).

Residues asparagine 21, leucine 23, glycine 48, glutamate 69, aspartate 94, and asparagine 120 each coordinate S-adenosyl-L-methionine.

The protein belongs to the class I-like SAM-binding methyltransferase superfamily. rRNA adenine N(6)-methyltransferase family. RsmA subfamily.

It localises to the cytoplasm. It carries out the reaction adenosine(1518)/adenosine(1519) in 16S rRNA + 4 S-adenosyl-L-methionine = N(6)-dimethyladenosine(1518)/N(6)-dimethyladenosine(1519) in 16S rRNA + 4 S-adenosyl-L-homocysteine + 4 H(+). In terms of biological role, specifically dimethylates two adjacent adenosines (A1518 and A1519) in the loop of a conserved hairpin near the 3'-end of 16S rRNA in the 30S particle. May play a critical role in biogenesis of 30S subunits. The protein is Ribosomal RNA small subunit methyltransferase A of Haemophilus ducreyi (strain 35000HP / ATCC 700724).